The chain runs to 252 residues: MLQKRIIPCLDVTEGRVVKGTNFINLRDAGDPVELAAFYDREGADELVFLDITASAEGRKTTVEMVYRTAGEVFIPFTVGGGISTLEDIRFILSAGADKVSINTAAVKDPQLVTEAANRFGSQCIVVAIDARQRGPESWEVYIHGGRTPTGIDAVEWAKKAEFLGAGEILLTSMDRDGTKDGYDLALTRAVARAVNIPVIASGGAGSLEHLYEGLTEGEADAVLAASIFHFGEYSIREAKEYLRSRGVPVRI.

Catalysis depends on residues D11 and D130.

The protein belongs to the HisA/HisF family. Heterodimer of HisH and HisF.

Its subcellular location is the cytoplasm. It carries out the reaction 5-[(5-phospho-1-deoxy-D-ribulos-1-ylimino)methylamino]-1-(5-phospho-beta-D-ribosyl)imidazole-4-carboxamide + L-glutamine = D-erythro-1-(imidazol-4-yl)glycerol 3-phosphate + 5-amino-1-(5-phospho-beta-D-ribosyl)imidazole-4-carboxamide + L-glutamate + H(+). Its pathway is amino-acid biosynthesis; L-histidine biosynthesis; L-histidine from 5-phospho-alpha-D-ribose 1-diphosphate: step 5/9. Functionally, IGPS catalyzes the conversion of PRFAR and glutamine to IGP, AICAR and glutamate. The HisF subunit catalyzes the cyclization activity that produces IGP and AICAR from PRFAR using the ammonia provided by the HisH subunit. The polypeptide is Imidazole glycerol phosphate synthase subunit HisF (Pelotomaculum thermopropionicum (strain DSM 13744 / JCM 10971 / SI)).